Consider the following 720-residue polypeptide: Glutaryl-7-aminocephalosporanic-acid acylase (720 aa).

Positions 1–29 (MLRVLHRAASALVMATVIGLAPGVAFALA) are cleaved as a signal peptide. Residues 188–198 (EGDPPDLADQG) constitute a propeptide, spacer peptide. The Nucleophile role is filled by S199. Residues H221 and E653 contribute to the active site.

It belongs to the peptidase S45 family. As to quaternary structure, heterodimer of a small subunit and a large subunit processed from the same precursor.

The protein resides in the periplasm. It carries out the reaction (7R)-7-(4-carboxybutanamido)cephalosporanate + H2O = (7R)-7-aminocephalosporanate + glutarate. Catalyzes the deacylation of 7 beta-(4-carboxybutanamido)cephalosporanic acid (glutaryl-7-aminocephalosporanic acid or GL-7-ACA) to 7-aminocephalosporanic acid (7-ACA). Cannot efficiently use cephalosporin C (CPC), penicillin G, or ampicillin as substrates. The protein is Glutaryl-7-aminocephalosporanic-acid acylase of Brevundimonas diminuta (Pseudomonas diminuta).